A 173-amino-acid polypeptide reads, in one-letter code: CKLF-like MARVEL transmembrane domain-containing protein 8 (173 aa).

The 133-residue stretch at 36 to 168 folds into the MARVEL domain; the sequence is FLRTPPGLLI…NTYFSFIAWR (133 aa). 4 helical membrane passes run 41 to 61, 70 to 90, 105 to 125, and 147 to 167; these read PGLLIVAEIVLGLLVWTLIAG, FGWVMFVAVFYWVLTVFFLIV, TTVGLCFNGSAFVLYFSAAIV, and FFAFLVTICYAGNTYFSFIAW.

This sequence belongs to the chemokine-like factor family.

Its subcellular location is the membrane. The sequence is that of CKLF-like MARVEL transmembrane domain-containing protein 8 (Cmtm8) from Mus musculus (Mouse).